An 89-amino-acid polypeptide reads, in one-letter code: Small ribosomal subunit protein uS15 (89 aa).

Residues 1 to 22 (MALEKEEKSQIINNYQLHETDT) form a disordered region. Over residues 10–22 (QIINNYQLHETDT) the composition is skewed to polar residues.

Belongs to the universal ribosomal protein uS15 family. In terms of assembly, part of the 30S ribosomal subunit. Forms a bridge to the 50S subunit in the 70S ribosome, contacting the 23S rRNA.

Functionally, one of the primary rRNA binding proteins, it binds directly to 16S rRNA where it helps nucleate assembly of the platform of the 30S subunit by binding and bridging several RNA helices of the 16S rRNA. Its function is as follows. Forms an intersubunit bridge (bridge B4) with the 23S rRNA of the 50S subunit in the ribosome. The sequence is that of Small ribosomal subunit protein uS15 from Chloroflexus aggregans (strain MD-66 / DSM 9485).